Reading from the N-terminus, the 602-residue chain is T-box transcription factor TBX15 (602 aa).

The tract at residues 46 to 84 is disordered; sequence ALSPAGPLGDTEDAAAHGLEPHPDSEQSTGSDSEVLTER. Residues 71–84 are compositionally biased toward polar residues; the sequence is EQSTGSDSEVLTER. The segment at residues 122–304 is a DNA-binding region (T-box); the sequence is LWKRFHDIGT…RNPFAKGFRD (183 aa). Position 330 is a phosphothreonine (Thr-330). Disordered regions lie at residues 338–369 and 425–447; these read QKQQ…LSPS and QSGT…PSLI. The span at 346 to 369 shows a compositional bias: low complexity; it reads GTSPTTSSTGTPSPSASSHLLSPS. A compositionally biased stretch (polar residues) spans 425–446; sequence QSGTTSATQPSETFMPQRTPSL.

In terms of assembly, can form a heterodimer with TBX18.

The protein resides in the nucleus. In terms of biological role, probable transcriptional regulator involved in the development of the skeleton of the limb, vertebral column and head. Acts by controlling the number of mesenchymal precursor cells and chondrocytes. This chain is T-box transcription factor TBX15 (TBX15), found in Homo sapiens (Human).